The following is a 264-amino-acid chain: 3-methyl-2-oxobutanoate hydroxymethyltransferase (264 aa).

The Mg(2+) site is built by D45 and D84. 3-methyl-2-oxobutanoate-binding positions include D45 to S46, D84, and K112. A Mg(2+)-binding site is contributed by E114. The Proton acceptor role is filled by E181.

It belongs to the PanB family. Homodecamer; pentamer of dimers. The cofactor is Mg(2+).

It is found in the cytoplasm. It carries out the reaction 3-methyl-2-oxobutanoate + (6R)-5,10-methylene-5,6,7,8-tetrahydrofolate + H2O = 2-dehydropantoate + (6S)-5,6,7,8-tetrahydrofolate. The protein operates within cofactor biosynthesis; (R)-pantothenate biosynthesis; (R)-pantoate from 3-methyl-2-oxobutanoate: step 1/2. Catalyzes the reversible reaction in which hydroxymethyl group from 5,10-methylenetetrahydrofolate is transferred onto alpha-ketoisovalerate to form ketopantoate. This Shewanella amazonensis (strain ATCC BAA-1098 / SB2B) protein is 3-methyl-2-oxobutanoate hydroxymethyltransferase.